A 301-amino-acid chain; its full sequence is D-psicose 3-epimerase (301 aa).

A substrate-binding site is contributed by Tyr16. The Proton donor/acceptor role is filled by Glu162. Mn(2+) is bound at residue Glu162. Substrate is bound by residues Glu168 and 195-198 (DTFH). Residues Asp195 and His221 each coordinate Mn(2+). Substrate is bound at residue Arg227. The active-site Proton donor/acceptor is Glu256. Position 256 (Glu256) interacts with Mn(2+).

The protein belongs to the hyi family. In terms of assembly, homotetramer. Mn(2+) is required as a cofactor. It depends on Co(2+) as a cofactor.

It catalyses the reaction D-allulose = keto-D-fructose. With respect to regulation, completely inhibited by EDTA and partially inhibited by Zn(2+), Mg(2+) and Cu(2+). Involved in the biosynthesis of D-psicose. Catalyzes the reversible epimerization of D-fructose at the C3 position to yield D-psicose. The enzyme is highly specific for D-psicose and shows very low activity with D-tagatose. The polypeptide is D-psicose 3-epimerase (Enterocloster bolteae (strain ATCC BAA-613 / DSM 15670 / CCUG 46953 / JCM 12243 / WAL 16351) (Clostridium bolteae)).